Here is a 155-residue protein sequence, read N- to C-terminus: Ribosomal RNA large subunit methyltransferase H (155 aa).

Residues Leu-73, Gly-104, and 123 to 128 each bind S-adenosyl-L-methionine; that span reads LSPLTL.

The protein belongs to the RNA methyltransferase RlmH family. Homodimer.

The protein resides in the cytoplasm. It carries out the reaction pseudouridine(1915) in 23S rRNA + S-adenosyl-L-methionine = N(3)-methylpseudouridine(1915) in 23S rRNA + S-adenosyl-L-homocysteine + H(+). In terms of biological role, specifically methylates the pseudouridine at position 1915 (m3Psi1915) in 23S rRNA. This is Ribosomal RNA large subunit methyltransferase H from Pseudomonas fluorescens (strain ATCC BAA-477 / NRRL B-23932 / Pf-5).